The primary structure comprises 192 residues: Peptidyl-tRNA hydrolase (192 aa).

Tyrosine 17 is a tRNA binding site. Histidine 22 functions as the Proton acceptor in the catalytic mechanism. Residues phenylalanine 68, asparagine 70, and asparagine 116 each coordinate tRNA.

This sequence belongs to the PTH family. As to quaternary structure, monomer.

It localises to the cytoplasm. It catalyses the reaction an N-acyl-L-alpha-aminoacyl-tRNA + H2O = an N-acyl-L-amino acid + a tRNA + H(+). Hydrolyzes ribosome-free peptidyl-tRNAs (with 1 or more amino acids incorporated), which drop off the ribosome during protein synthesis, or as a result of ribosome stalling. Its function is as follows. Catalyzes the release of premature peptidyl moieties from peptidyl-tRNA molecules trapped in stalled 50S ribosomal subunits, and thus maintains levels of free tRNAs and 50S ribosomes. The polypeptide is Peptidyl-tRNA hydrolase (Xylella fastidiosa (strain Temecula1 / ATCC 700964)).